Reading from the N-terminus, the 331-residue chain is MESHGSGLRRVLLLSFCVAGIWAAYIYQGILQETLSTKKFGEDGKRFEHLAFLNLAQNVICLVWSYIMIKLWSNGGSGGAPWWTYWSAGITNTIGPAMGIEALKYISYPAQVLAKSSKMIPVMLMGSLVYGIRYTLPEYLCTFLVAGGVSMFALLKTSSKTISKLAHPNAPLGYGLCFLNLAFDGFTNATQDSITARYPKTNAWDIMLGMNLWGTIYNMVYMFGLPHGSGFEAVQFCKQHPEAAWDILMYCLCGAVGQNFIFLTISRFGSLANTTITTTRKFVSIVVSSVLSGNPLSSKQWGCVSMVFGGLSYQIYLKWRKLQRMQKKKKA.

8 helical membrane-spanning segments follow: residues 11–31, 49–69, 80–100, 112–132, 135–155, 170–190, 206–226, and 245–265; these read VLLL…QGIL, HLAF…YIMI, APWW…AMGI, VLAK…VYGI, TLPE…FALL, APLG…TNAT, IMLG…FGLP, and WDIL…FLTI. The Di-lysine motif motif lies at 327-331; that stretch reads KKKKA.

This sequence belongs to the nucleotide-sugar transporter family. UDP-galactose:UMP antiporter (TC 2.A.7.11) subfamily. As to expression, mostly expressed in flowers, and, to a lower extent, in roots, stems and leaves.

It localises to the endoplasmic reticulum membrane. The protein localises to the golgi apparatus membrane. Essential sugar transporter required for the transport of UDP-glucose from the cytoplasm into the Golgi and the endoplasmic reticulum. Essential for pollen development and involved in embryo sac progress. The chain is UDP-galactose/UDP-glucose transporter 3 from Arabidopsis thaliana (Mouse-ear cress).